A 626-amino-acid polypeptide reads, in one-letter code: UvrABC system protein C (626 aa).

Positions 25 to 104 constitute a GIY-YIG domain; it reads TSPGVYRFSN…IKELKPRYNV (80 aa). Residues 218–253 enclose the UVR domain; sequence SALLRDLSAEMQKKAKELKFEEAAALKAQIEGLKRY.

It belongs to the UvrC family. In terms of assembly, interacts with UvrB in an incision complex.

It localises to the cytoplasm. Its function is as follows. The UvrABC repair system catalyzes the recognition and processing of DNA lesions. UvrC both incises the 5' and 3' sides of the lesion. The N-terminal half is responsible for the 3' incision and the C-terminal half is responsible for the 5' incision. The sequence is that of UvrABC system protein C from Chlorobaculum tepidum (strain ATCC 49652 / DSM 12025 / NBRC 103806 / TLS) (Chlorobium tepidum).